Consider the following 42-residue polypeptide: uncharacterized protein (42 aa).

A helical membrane pass occupies residues Val18–Leu38.

The protein resides in the host membrane. This is an uncharacterized protein from His1 virus (isolate Australia/Victoria) (His1V).